The chain runs to 356 residues: Palmitoyltransferase swf1 (356 aa).

Residues 1–2 are Lumenal-facing; it reads MD. A helical transmembrane segment spans residues 3 to 23; the sequence is FFYKYLALVAIASLMVFILLF. Over 24 to 78 the chain is Cytoplasmic; the sequence is GQIPKLKYTVIGKLNRFFMVTIPYHLHVLDSRYADGRCSAAMRSLSNYVLYKNNP. A helical membrane pass occupies residues 79–99; the sequence is LVVFLYLALITIGIASFFIYG. At 100–107 the chain is on the lumenal side; the sequence is SSLTQKFS. The chain crosses the membrane as a helical span at residues 108–128; the sequence is IIDWISVLTSVLLPYISLYIA. Residues 129–201 lie on the Cytoplasmic side of the membrane; sequence AKSNPGKIDL…NNCVGLNNAR (73 aa). One can recognise a DHHC domain in the interval 158–208; the sequence is NKCSTCKFEKPARSKHCRLCNICVEKFDHHCIWINNCVGLNNARYFFLFLL. The chain crosses the membrane as a helical span at residues 202–222; that stretch reads YFFLFLLCTIQLLFHSILRLG. At 223–253 the chain is on the lumenal side; the sequence is YHFNALRDMRQYPSFLRSWWFAIKSEGELGS. A helical transmembrane segment spans residues 254-274; it reads VFLISLICSVLVLCLLGYEFF. Over 275–356 the chain is Cytoplasmic; the sequence is LVYAGYTTNE…FPYRHLYSTT (82 aa).

It belongs to the DHHC palmitoyltransferase family. SWF1 subfamily.

It is found in the endoplasmic reticulum membrane. The enzyme catalyses L-cysteinyl-[protein] + hexadecanoyl-CoA = S-hexadecanoyl-L-cysteinyl-[protein] + CoA. Functionally, palmitoyltransferase that targets several endosomal SNAREs. Palmitoylates the SNAREs at cysteine residues close to the cytoplasmic end of their transmembrane domain. May have a role in the cellular quality control of transmembrane domain-containing proteins. The chain is Palmitoyltransferase swf1 (swf1) from Schizosaccharomyces pombe (strain 972 / ATCC 24843) (Fission yeast).